Reading from the N-terminus, the 878-residue chain is Phosphoenolpyruvate carboxylase (878 aa).

Active-site residues include histidine 137 and lysine 545.

Belongs to the PEPCase type 1 family. Mg(2+) serves as cofactor.

It catalyses the reaction oxaloacetate + phosphate = phosphoenolpyruvate + hydrogencarbonate. In terms of biological role, forms oxaloacetate, a four-carbon dicarboxylic acid source for the tricarboxylic acid cycle. The chain is Phosphoenolpyruvate carboxylase from Serratia proteamaculans (strain 568).